The following is a 426-amino-acid chain: Glutamate/glutamine/aspartate/asparagine transport system permease protein BztB (426 aa).

The next 8 membrane-spanning stretches (helical) occupy residues Ser25 to Asn45, Leu96 to Leu116, Val132 to Ala152, Leu211 to Trp231, Trp252 to Phe272, Ser293 to Val313, Ser340 to Leu360, and Met396 to Leu416. Residues Leu92–Met414 form the ABC transmembrane type-1 domain.

Belongs to the binding-protein-dependent transport system permease family. HisMQ subfamily. In terms of assembly, bztB and BztC form a heterodimer which can form a membrane complex with a homodimer of BztD.

It is found in the cell inner membrane. In terms of biological role, part of a binding-protein-dependent transport system for glutamate, glutamine, aspartate and asparagine. Probably responsible for the translocation of the substrate across the membrane. The sequence is that of Glutamate/glutamine/aspartate/asparagine transport system permease protein BztB (bztB) from Rhodobacter capsulatus (strain ATCC BAA-309 / NBRC 16581 / SB1003).